The chain runs to 206 residues: dITP/XTP pyrophosphatase (206 aa).

A substrate-binding site is contributed by 7-12; that stretch reads SNNAKK. Asp72 serves as the catalytic Proton acceptor. Position 72 (Asp72) interacts with Mg(2+). Substrate is bound by residues Ser73, 155 to 158, Lys182, and 187 to 188; these read FGYD and HR.

The protein belongs to the HAM1 NTPase family. As to quaternary structure, homodimer. Requires Mg(2+) as cofactor.

It catalyses the reaction XTP + H2O = XMP + diphosphate + H(+). The catalysed reaction is dITP + H2O = dIMP + diphosphate + H(+). It carries out the reaction ITP + H2O = IMP + diphosphate + H(+). In terms of biological role, pyrophosphatase that catalyzes the hydrolysis of nucleoside triphosphates to their monophosphate derivatives, with a high preference for the non-canonical purine nucleotides XTP (xanthosine triphosphate), dITP (deoxyinosine triphosphate) and ITP. Seems to function as a house-cleaning enzyme that removes non-canonical purine nucleotides from the nucleotide pool, thus preventing their incorporation into DNA/RNA and avoiding chromosomal lesions. In Corynebacterium glutamicum (strain R), this protein is dITP/XTP pyrophosphatase.